The primary structure comprises 394 residues: Na(+)/H(+) antiporter NhaA (394 aa).

The next 11 membrane-spanning stretches (helical) occupy residues 14–34 (AGGL…NSAL), 59–79 (LLLW…GLEV), 95–115 (VFPA…YLLF), 125–145 (GWAI…ALLG), 154–174 (VFLL…IALF), 179–199 (VSLQ…YMNW), 213–233 (LVLW…GVIV), 254–274 (GLHP…NAGV), 292–312 (IATG…WLAV), 328–348 (IFAV…IASL), and 363–383 (LGIL…LRLV).

The protein belongs to the NhaA Na(+)/H(+) (TC 2.A.33) antiporter family.

The protein resides in the cell inner membrane. It carries out the reaction Na(+)(in) + 2 H(+)(out) = Na(+)(out) + 2 H(+)(in). Its function is as follows. Na(+)/H(+) antiporter that extrudes sodium in exchange for external protons. The chain is Na(+)/H(+) antiporter NhaA from Yersinia pseudotuberculosis serotype IB (strain PB1/+).